We begin with the raw amino-acid sequence, 344 residues long: Endo-1,4-beta-xylanase UM03411 (344 aa).

A signal peptide spans 1–21 (MKTNFLVLLSALLAASSAVTA). The GH10 domain maps to 35–338 (QRAGSSLNAA…KPAYNAVLST (304 aa)). The Proton donor role is filled by E166. The N-linked (GlcNAc...) asparagine glycan is linked to N171. E275 (nucleophile) is an active-site residue. An intrachain disulfide couples C293 to C299. N310 and N323 each carry an N-linked (GlcNAc...) asparagine glycan.

It belongs to the glycosyl hydrolase 10 (cellulase F) family.

The protein resides in the secreted. The enzyme catalyses Endohydrolysis of (1-&gt;4)-beta-D-xylosidic linkages in xylans.. Its pathway is glycan degradation; xylan degradation. In terms of biological role, endo-1,4-beta-xylanase involved in the hydrolysis of xylan, a major structural heterogeneous polysaccharide found in plant biomass representing the second most abundant polysaccharide in the biosphere, after cellulose. This chain is Endo-1,4-beta-xylanase UM03411, found in Mycosarcoma maydis (Corn smut fungus).